We begin with the raw amino-acid sequence, 361 residues long: Biotin synthase (361 aa).

Positions 63 to 290 constitute a Radical SAM core domain; sequence NTVQLSTLLS…RAMVRLSAGR (228 aa). Residues Cys78, Cys82, and Cys85 each coordinate [4Fe-4S] cluster. [2Fe-2S] cluster is bound by residues Cys122, Cys153, Cys213, and Arg285.

It belongs to the radical SAM superfamily. Biotin synthase family. Homodimer. [4Fe-4S] cluster serves as cofactor. [2Fe-2S] cluster is required as a cofactor.

The enzyme catalyses (4R,5S)-dethiobiotin + (sulfur carrier)-SH + 2 reduced [2Fe-2S]-[ferredoxin] + 2 S-adenosyl-L-methionine = (sulfur carrier)-H + biotin + 2 5'-deoxyadenosine + 2 L-methionine + 2 oxidized [2Fe-2S]-[ferredoxin]. The protein operates within cofactor biosynthesis; biotin biosynthesis; biotin from 7,8-diaminononanoate: step 2/2. Its function is as follows. Catalyzes the conversion of dethiobiotin (DTB) to biotin by the insertion of a sulfur atom into dethiobiotin via a radical-based mechanism. This is Biotin synthase from Paraburkholderia phytofirmans (strain DSM 17436 / LMG 22146 / PsJN) (Burkholderia phytofirmans).